The following is a 93-amino-acid chain: MDGIKYAVFTDKSIRLLGKNQYTFNVESGSTRTEIKHWVELFFGVKVKAMNSHRLPGKGRRMGPILGHTMHYRRMIITLQPGYSIPPLRKKRT.

Belongs to the universal ribosomal protein uL23 family. In terms of assembly, part of the 50S ribosomal subunit.

Its subcellular location is the plastid. The protein localises to the chloroplast. Functionally, binds to 23S rRNA. This Eucalyptus globulus subsp. globulus (Tasmanian blue gum) protein is Large ribosomal subunit protein uL23cz/uL23cy (rpl23-A).